The primary structure comprises 365 residues: Anhydro-N-acetylmuramic acid kinase (365 aa).

An ATP-binding site is contributed by 9–16 (GTSLDGVD).

Belongs to the anhydro-N-acetylmuramic acid kinase family.

The catalysed reaction is 1,6-anhydro-N-acetyl-beta-muramate + ATP + H2O = N-acetyl-D-muramate 6-phosphate + ADP + H(+). It participates in amino-sugar metabolism; 1,6-anhydro-N-acetylmuramate degradation. It functions in the pathway cell wall biogenesis; peptidoglycan recycling. Its function is as follows. Catalyzes the specific phosphorylation of 1,6-anhydro-N-acetylmuramic acid (anhMurNAc) with the simultaneous cleavage of the 1,6-anhydro ring, generating MurNAc-6-P. Is required for the utilization of anhMurNAc either imported from the medium or derived from its own cell wall murein, and thus plays a role in cell wall recycling. The chain is Anhydro-N-acetylmuramic acid kinase from Rhodopseudomonas palustris (strain BisB18).